The following is a 383-amino-acid chain: Putative glutamate--cysteine ligase 2-1 (383 aa).

Belongs to the glutamate--cysteine ligase type 2 family. YbdK subfamily.

The enzyme catalyses L-cysteine + L-glutamate + ATP = gamma-L-glutamyl-L-cysteine + ADP + phosphate + H(+). ATP-dependent carboxylate-amine ligase which exhibits weak glutamate--cysteine ligase activity. This is Putative glutamate--cysteine ligase 2-1 from Arthrobacter sp. (strain FB24).